The primary structure comprises 205 residues: Proteasome subunit beta type-3 (205 aa).

Belongs to the peptidase T1B family. In terms of assembly, the 26S proteasome consists of a 20S proteasome core and two 19S regulatory subunits. The 20S proteasome core is composed of 28 subunits that are arranged in four stacked rings, resulting in a barrel-shaped structure. The two end rings are each formed by seven alpha subunits, and the two central rings are each formed by seven beta subunits. The catalytic chamber with the active sites is on the inside of the barrel.

It is found in the cytoplasm. The protein resides in the nucleus. In terms of biological role, non-catalytic component of the proteasome, a multicatalytic proteinase complex which is characterized by its ability to cleave peptides with Arg, Phe, Tyr, Leu, and Glu adjacent to the leaving group at neutral or slightly basic pH. The proteasome has an ATP-dependent proteolytic activity. This Trypanosoma brucei brucei protein is Proteasome subunit beta type-3 (PSB3).